Here is a 344-residue protein sequence, read N- to C-terminus: AI-2 transport protein TqsA (344 aa).

Topologically, residues 1–4 are cytoplasmic; the sequence is MAKP. Residues 5 to 25 form a helical membrane-spanning segment; sequence IITLNGLKIVIMLGMLVIILC. Topologically, residues 26 to 30 are periplasmic; sequence GIRFA. A helical transmembrane segment spans residues 31-51; sequence AEIIVPFILALFIAVILNPLV. At 52–61 the chain is on the cytoplasmic side; it reads QHMVRWRVPR. A helical membrane pass occupies residues 62–82; that stretch reads VLAVSILMTIIVMAMVLLLAY. The Periplasmic segment spans residues 83–149; it reads LGSALNELTR…LLTQLSNAMS (67 aa). A helical membrane pass occupies residues 150 to 170; that stretch reads SIFLLLLTVLFMLLEVPQLPG. Over 171–196 the chain is Cytoplasmic; it reads KFQQMMARPVEGMAAIQRAIDSVSHY. The chain crosses the membrane as a helical span at residues 197–217; it reads LVLKTAISIITGLVAWAMLAA. The Periplasmic segment spans residues 218–221; it reads LDVR. Residues 222-242 form a helical membrane-spanning segment; it reads FAFVWGLLAFALNYIPNIGSV. At 243-257 the chain is on the cytoplasmic side; sequence LAAIPPIAQVLVFNG. A helical transmembrane segment spans residues 258–278; that stretch reads FYEALLVLAGYLLINLVFGNI. At 279–292 the chain is on the periplasmic side; it reads LEPRIMGRGLGLST. Residues 293–313 form a helical membrane-spanning segment; sequence LVVFLSLIFWGWLLGPVGMLL. Topologically, residues 314 to 344 are cytoplasmic; the sequence is SVPLTIIVKIALEQTAGGQSIAVLLSDLNKE.

It belongs to the autoinducer-2 exporter (AI-2E) (TC 2.A.86) family.

It localises to the cell inner membrane. It catalyses the reaction (2R,4S)-2-methyltetrahydrofuran-2,3,3,4-tetrol(in) = (2R,4S)-2-methyltetrahydrofuran-2,3,3,4-tetrol(out). Its function is as follows. Involved in the transport of the quorum-sensing signal autoinducer 2 (AI-2). Controls the transport of AI-2 either by enhancing its secretion or inhibiting its uptake and consequently represses biofilm formation and motility and affects the global gene expression in biofilms. The sequence is that of AI-2 transport protein TqsA from Escherichia coli (strain K12).